An 819-amino-acid polypeptide reads, in one-letter code: Proteome of basal body protein 15 (819 aa).

Composition is skewed to low complexity over residues 46 to 59 and 572 to 581; these read PASS…NPGR and RQQQQQQQHT. 2 disordered regions span residues 46–72 and 564–590; these read PASS…LATG and ERQR…GGGV. The stretch at 546 to 580 forms a coiled coil; the sequence is YVVLREAVARVQARMEQQERQRRLLERQQQQQQQH.

It localises to the cytoplasm. Its subcellular location is the cytoskeleton. The protein localises to the microtubule organizing center. The protein resides in the centrosome. It is found in the centriole. This Chlamydomonas reinhardtii (Chlamydomonas smithii) protein is Proteome of basal body protein 15.